The chain runs to 1070 residues: DNA-directed RNA polymerase subunit beta (1070 aa).

This sequence belongs to the RNA polymerase beta chain family. In terms of assembly, in plastids the minimal PEP RNA polymerase catalytic core is composed of four subunits: alpha, beta, beta', and beta''. When a (nuclear-encoded) sigma factor is associated with the core the holoenzyme is formed, which can initiate transcription.

It is found in the plastid. Its subcellular location is the chloroplast. It carries out the reaction RNA(n) + a ribonucleoside 5'-triphosphate = RNA(n+1) + diphosphate. In terms of biological role, DNA-dependent RNA polymerase catalyzes the transcription of DNA into RNA using the four ribonucleoside triphosphates as substrates. The chain is DNA-directed RNA polymerase subunit beta from Vitis vinifera (Grape).